A 396-amino-acid polypeptide reads, in one-letter code: 1-deoxy-D-xylulose 5-phosphate reductoisomerase (396 aa).

6 residues coordinate NADPH: Thr15, Gly16, Ser17, Ile18, Gly41, and Asn129. Lys130 provides a ligand contact to 1-deoxy-D-xylulose 5-phosphate. Residue Glu131 coordinates NADPH. Asp155 contacts Mn(2+). Positions 156, 157, 182, and 205 each coordinate 1-deoxy-D-xylulose 5-phosphate. Glu157 contacts Mn(2+). An NADPH-binding site is contributed by Gly211. Residues Ser218, Asn223, Lys224, and Glu227 each coordinate 1-deoxy-D-xylulose 5-phosphate. Glu227 contacts Mn(2+).

It belongs to the DXR family. Requires Mg(2+) as cofactor. Mn(2+) serves as cofactor.

The catalysed reaction is 2-C-methyl-D-erythritol 4-phosphate + NADP(+) = 1-deoxy-D-xylulose 5-phosphate + NADPH + H(+). It functions in the pathway isoprenoid biosynthesis; isopentenyl diphosphate biosynthesis via DXP pathway; isopentenyl diphosphate from 1-deoxy-D-xylulose 5-phosphate: step 1/6. Functionally, catalyzes the NADPH-dependent rearrangement and reduction of 1-deoxy-D-xylulose-5-phosphate (DXP) to 2-C-methyl-D-erythritol 4-phosphate (MEP). The sequence is that of 1-deoxy-D-xylulose 5-phosphate reductoisomerase from Xanthomonas campestris pv. campestris (strain 8004).